Here is a 193-residue protein sequence, read N- to C-terminus: Phosphatidylglycerophosphatase and protein-tyrosine phosphatase 1 (193 aa).

The N-terminal 31 residues, 1-31 (MAASAWLEAGLARVLFYPTLLYTVFRGRVRG), are a transit peptide targeting the mitochondrion. A Tyrosine-protein phosphatase domain is found at 37–188 (WYHRIDHTVL…LKEFHKEITA (152 aa)). Lysine 85 carries the post-translational modification N6-succinyllysine. The Phosphocysteine intermediate role is filled by cysteine 132.

This sequence belongs to the protein-tyrosine phosphatase family. Non-receptor class dual specificity subfamily. In terms of assembly, interacts with STYXL1; the interaction inhibits PTPMT1 catalytic activity. Predominantly expressed in testis. Expressed at lower level in heart, brain, spleen, lung, liver, skeletal muscle, kidney, bone marrow, eye, lymph node, smooth muscle, prostate, thymus, stomach and uterus.

It is found in the mitochondrion inner membrane. The enzyme catalyses a 1,2-diacyl-sn-glycero-3-phospho-(1'-sn-glycero-3'-phosphate) + H2O = a 1,2-diacyl-sn-glycero-3-phospho-(1'-sn-glycerol) + phosphate. It catalyses the reaction O-phospho-L-tyrosyl-[protein] + H2O = L-tyrosyl-[protein] + phosphate. It carries out the reaction O-phospho-L-seryl-[protein] + H2O = L-seryl-[protein] + phosphate. The catalysed reaction is O-phospho-L-threonyl-[protein] + H2O = L-threonyl-[protein] + phosphate. The enzyme catalyses 1,2-di-(9Z-octadecenoyl)-sn-glycero-3-phospho-(1'-sn-glycerol-3'-phosphate) + H2O = 1,2-di-(9Z-octadecenoyl)-sn-glycero-3-phospho-(1'-sn-glycerol) + phosphate. It catalyses the reaction 1,2-dioctanoyl-sn-glycero-3-phospho-(1D-myo-inositol-5-phosphate) + H2O = 1,2-dioctanoyl-sn-glycero-3-phospho-(1D-myo-inositol) + phosphate. It carries out the reaction a 1-acyl-2-hexanoyl-sn-glycero-3-phospho-(1D-myo-inositol-5-phosphate) + H2O = a 1-acyl-2-hexanoyl-sn-glycero-3-phospho-(1D-myo-inositol) + phosphate. The catalysed reaction is 1,2-dibutyryl-sn-glycero-3-phospho-(1D-myo-inositol-5-phosphate) + H2O = 1,2-dibutyryl-sn-glycero-3-phospho-(1D-myo-inositol) + phosphate. Its pathway is phospholipid metabolism; phosphatidylglycerol biosynthesis; phosphatidylglycerol from CDP-diacylglycerol: step 2/2. Lipid phosphatase which dephosphorylates phosphatidylglycerophosphate (PGP) to phosphatidylglycerol (PG). PGP is an essential intermediate in the biosynthetic pathway of cardiolipin, a mitochondrial-specific phospholipid regulating the membrane integrity and activities of the organelle. Has also been shown to display phosphatase activity toward phosphoprotein substrates, specifically mediates dephosphorylation of mitochondrial proteins, thereby playing an essential role in ATP production. Has probably a preference for proteins phosphorylated on Ser and/or Thr residues compared to proteins phosphorylated on Tyr residues. Probably involved in regulation of insulin secretion in pancreatic beta cells. May prevent intrinsic apoptosis, probably by regulating mitochondrial membrane integrity. In Mus musculus (Mouse), this protein is Phosphatidylglycerophosphatase and protein-tyrosine phosphatase 1.